Consider the following 322-residue polypeptide: 4-diphosphocytidyl-2-C-methyl-D-erythritol kinase (322 aa).

The active site involves lysine 25. ATP is bound at residue 110–120 (PVAGGMAGGSA). Aspartate 152 is an active-site residue.

The protein belongs to the GHMP kinase family. IspE subfamily.

The enzyme catalyses 4-CDP-2-C-methyl-D-erythritol + ATP = 4-CDP-2-C-methyl-D-erythritol 2-phosphate + ADP + H(+). It functions in the pathway isoprenoid biosynthesis; isopentenyl diphosphate biosynthesis via DXP pathway; isopentenyl diphosphate from 1-deoxy-D-xylulose 5-phosphate: step 3/6. In terms of biological role, catalyzes the phosphorylation of the position 2 hydroxy group of 4-diphosphocytidyl-2C-methyl-D-erythritol. The protein is 4-diphosphocytidyl-2-C-methyl-D-erythritol kinase of Mycolicibacterium vanbaalenii (strain DSM 7251 / JCM 13017 / BCRC 16820 / KCTC 9966 / NRRL B-24157 / PYR-1) (Mycobacterium vanbaalenii).